The chain runs to 301 residues: Ribosomal protein L11 methyltransferase (301 aa).

S-adenosyl-L-methionine-binding residues include T152, G173, D195, and N236.

Belongs to the methyltransferase superfamily. PrmA family.

The protein resides in the cytoplasm. It carries out the reaction L-lysyl-[protein] + 3 S-adenosyl-L-methionine = N(6),N(6),N(6)-trimethyl-L-lysyl-[protein] + 3 S-adenosyl-L-homocysteine + 3 H(+). In terms of biological role, methylates ribosomal protein L11. The sequence is that of Ribosomal protein L11 methyltransferase from Dictyoglomus thermophilum (strain ATCC 35947 / DSM 3960 / H-6-12).